Reading from the N-terminus, the 650-residue chain is SPARC-like protein 1 (650 aa).

Positions 1 to 16 (MKAVLLLLCALGTAVA) are cleaved as a signal peptide. A disordered region spans residues 51 to 352 (TADIENHPSD…HGAGDDYFIP (302 aa)). The span at 54 to 64 (IENHPSDKAEK) shows a compositional bias: basic and acidic residues. Ser-70, Ser-78, and Ser-86 each carry phosphoserine. Positions 75–85 (HEQSTEQDKTY) are enriched in basic and acidic residues. Residues 91–101 (LKDEEDGDGDL) show a composition bias toward acidic residues. 2 stretches are compositionally biased toward polar residues: residues 116 to 126 (EGTSEPQQKSL) and 135 to 148 (TVST…QRAN). The N-linked (GlcNAc...) asparagine glycan is linked to Asn-148. Phosphoserine is present on residues Ser-155 and Ser-163. The segment covering 157 to 174 (EQPVSDSHQQPNESSKQT) has biased composition (polar residues). Asn-168 carries N-linked (GlcNAc...) asparagine glycosylation. Residues 189 to 210 (IPNEEEEEEEDEEEEEEEEPED) are compositionally biased toward acidic residues. Ser-272 carries the post-translational modification Phosphoserine. A compositionally biased stretch (basic and acidic residues) spans 277–299 (EDKAAGSKEHIPHTEQQDQEGKA). Ser-353 carries the phosphoserine modification. The interval 375 to 415 (EETTTGESENRREAADNQEAKKAESSPNAEPSDEGNSREHS) is disordered. A compositionally biased stretch (basic and acidic residues) spans 382–398 (SENRREAADNQEAKKAE). Ser-406 bears the Phosphoserine mark. Residues 418–440 (SCTNFQCKRGHICKTDPQGKPHC) form the Follistatin-like domain. 7 disulfide bridges follow: Cys-419-Cys-430, Cys-424-Cys-440, Cys-442-Cys-476, Cys-448-Cys-469, Cys-458-Cys-495, Cys-501-Cys-612, and Cys-620-Cys-636. One can recognise a Kazal-like domain in the interval 436-497 (GKPHCVCQDP…QLDYFGACKS (62 aa)). N-linked (GlcNAc...) asparagine glycosylation occurs at Asn-462. The EF-hand domain occupies 608-643 (PMEHCITRFFEECDPNKDKHITLKEWGHCFGIKEED). Asp-621, Asn-623, Asp-625, His-627, and Glu-632 together coordinate Ca(2+).

It belongs to the SPARC family. As to expression, highest expression in brain. Moderate levels in heart, adrenal gland, epididymis and lung. Low levels in kidney, eye, liver, spleen, submandibular gland and testis.

It is found in the secreted. The protein resides in the extracellular space. The protein localises to the extracellular matrix. The polypeptide is SPARC-like protein 1 (Sparcl1) (Mus musculus (Mouse)).